Here is a 362-residue protein sequence, read N- to C-terminus: Dihydroorotate dehydrogenase (quinone) (362 aa).

FMN is bound by residues 62–66 (AGYDK) and threonine 86. Lysine 66 contacts substrate. A substrate-binding site is contributed by 111–115 (NRLGF). 2 residues coordinate FMN: asparagine 139 and asparagine 170. Asparagine 170 is a binding site for substrate. Catalysis depends on serine 173, which acts as the Nucleophile. Residue asparagine 175 participates in substrate binding. FMN-binding residues include lysine 215 and serine 243. A substrate-binding site is contributed by 244–245 (NT). FMN contacts are provided by residues glycine 266, glycine 295, and 316–317 (YS).

This sequence belongs to the dihydroorotate dehydrogenase family. Type 2 subfamily. In terms of assembly, monomer. FMN serves as cofactor.

It localises to the cell membrane. The catalysed reaction is (S)-dihydroorotate + a quinone = orotate + a quinol. It functions in the pathway pyrimidine metabolism; UMP biosynthesis via de novo pathway; orotate from (S)-dihydroorotate (quinone route): step 1/1. Catalyzes the conversion of dihydroorotate to orotate with quinone as electron acceptor. This Rhizobium johnstonii (strain DSM 114642 / LMG 32736 / 3841) (Rhizobium leguminosarum bv. viciae) protein is Dihydroorotate dehydrogenase (quinone).